We begin with the raw amino-acid sequence, 604 residues long: Putative ankyrin repeat protein L56 (604 aa).

13 ANK repeats span residues Ile77 to Val106, Phe135 to Gly164, Leu166 to Asn189, Thr190 to Arg219, Asn221 to Ile247, Asp248 to Tyr277, Lys314 to Val341, Asp342 to Asp371, Glu380 to Tyr410, Tyr445 to Pro474, Ile475 to Ile504, Asn505 to Thr534, and Asp535 to Asn565.

This is Putative ankyrin repeat protein L56 from Acanthamoeba polyphaga (Amoeba).